Reading from the N-terminus, the 483-residue chain is Glutamyl-tRNA(Gln) amidotransferase subunit A (483 aa).

Catalysis depends on charge relay system residues K76 and S151. S175 (acyl-ester intermediate) is an active-site residue.

Belongs to the amidase family. GatA subfamily. As to quaternary structure, heterotrimer of A, B and C subunits.

The catalysed reaction is L-glutamyl-tRNA(Gln) + L-glutamine + ATP + H2O = L-glutaminyl-tRNA(Gln) + L-glutamate + ADP + phosphate + H(+). Allows the formation of correctly charged Gln-tRNA(Gln) through the transamidation of misacylated Glu-tRNA(Gln) in organisms which lack glutaminyl-tRNA synthetase. The reaction takes place in the presence of glutamine and ATP through an activated gamma-phospho-Glu-tRNA(Gln). This chain is Glutamyl-tRNA(Gln) amidotransferase subunit A, found in Pseudomonas putida (strain ATCC 700007 / DSM 6899 / JCM 31910 / BCRC 17059 / LMG 24140 / F1).